A 328-amino-acid polypeptide reads, in one-letter code: DNA-directed RNA polymerase subunit alpha (328 aa).

The interval 1–244 (MEKFLKYEIK…EHLNPIVSVN (244 aa)) is alpha N-terminal domain (alpha-NTD). An alpha C-terminal domain (alpha-CTD) region spans residues 261-328 (KVKSFAKQIE…VQELGLKFRS (68 aa)).

Belongs to the RNA polymerase alpha chain family. Homodimer. The RNAP catalytic core consists of 2 alpha, 1 beta, 1 beta' and 1 omega subunit. When a sigma factor is associated with the core the holoenzyme is formed, which can initiate transcription.

It carries out the reaction RNA(n) + a ribonucleoside 5'-triphosphate = RNA(n+1) + diphosphate. Functionally, DNA-dependent RNA polymerase catalyzes the transcription of DNA into RNA using the four ribonucleoside triphosphates as substrates. The protein is DNA-directed RNA polymerase subunit alpha of Mycoplasma genitalium (strain ATCC 33530 / DSM 19775 / NCTC 10195 / G37) (Mycoplasmoides genitalium).